The chain runs to 170 residues: MPTSTGAQRLAELLAPVVAGQGLDLEGVTLLDHRTSAHLRIVVDKDGGVQLDEIAAASQAISHFLDNDAEADAIIGPRSYTLEVSSPGIDRPLVEPRHWRRAIGRLVRVQLPDLGPVVARVQDVTGDQVRLGIEWQYTDDGACVRQYEERTVAIAEVRPGQIEVEFEEHP.

The protein belongs to the RimP family.

It localises to the cytoplasm. In terms of biological role, required for maturation of 30S ribosomal subunits. This chain is Ribosome maturation factor RimP, found in Acidothermus cellulolyticus (strain ATCC 43068 / DSM 8971 / 11B).